A 60-amino-acid polypeptide reads, in one-letter code: Large ribosomal subunit protein bL32 (60 aa).

Residues 1 to 16 show a composition bias toward basic residues; sequence MAVPKRKTTPSKRGMR. The tract at residues 1 to 60 is disordered; sequence MAVPKRKTTPSKRGMRRSADALKQPAYVENPDSGELHRPHHVDLKSGMYRGKQILKPKGE. Over residues 34–44 the composition is skewed to basic and acidic residues; sequence GELHRPHHVDL.

Belongs to the bacterial ribosomal protein bL32 family.

The protein is Large ribosomal subunit protein bL32 of Parvibaculum lavamentivorans (strain DS-1 / DSM 13023 / NCIMB 13966).